Consider the following 193-residue polypeptide: Ion-translocating oxidoreductase complex subunit A (193 aa).

A run of 6 helical transmembrane segments spans residues phenylalanine 5 to leucine 25, phenylalanine 47 to phenylalanine 67, leucine 72 to leucine 92, isoleucine 102 to phenylalanine 122, isoleucine 134 to isoleucine 154, and proline 171 to valine 191.

The protein belongs to the NqrDE/RnfAE family. In terms of assembly, the complex is composed of six subunits: RnfA, RnfB, RnfC, RnfD, RnfE and RnfG.

It localises to the cell inner membrane. Functionally, part of a membrane-bound complex that couples electron transfer with translocation of ions across the membrane. This is Ion-translocating oxidoreductase complex subunit A from Buchnera aphidicola subsp. Schizaphis graminum (strain Sg).